Here is a 199-residue protein sequence, read N- to C-terminus: Pyridoxal 5'-phosphate synthase subunit PdxT (199 aa).

52-54 contributes to the L-glutamine binding site; that stretch reads GES. Cysteine 84 acts as the Nucleophile in catalysis. L-glutamine contacts are provided by residues arginine 115 and 143–144; that span reads IR. Catalysis depends on charge relay system residues histidine 179 and glutamate 181.

Belongs to the glutaminase PdxT/SNO family. As to quaternary structure, in the presence of PdxS, forms a dodecamer of heterodimers. Only shows activity in the heterodimer.

It catalyses the reaction aldehydo-D-ribose 5-phosphate + D-glyceraldehyde 3-phosphate + L-glutamine = pyridoxal 5'-phosphate + L-glutamate + phosphate + 3 H2O + H(+). It carries out the reaction L-glutamine + H2O = L-glutamate + NH4(+). It functions in the pathway cofactor biosynthesis; pyridoxal 5'-phosphate biosynthesis. Catalyzes the hydrolysis of glutamine to glutamate and ammonia as part of the biosynthesis of pyridoxal 5'-phosphate. The resulting ammonia molecule is channeled to the active site of PdxS. In Methanosarcina mazei (strain ATCC BAA-159 / DSM 3647 / Goe1 / Go1 / JCM 11833 / OCM 88) (Methanosarcina frisia), this protein is Pyridoxal 5'-phosphate synthase subunit PdxT.